Reading from the N-terminus, the 633-residue chain is Biosynthetic arginine decarboxylase (633 aa).

The residue at position 101 (lysine 101) is an N6-(pyridoxal phosphate)lysine. A substrate-binding site is contributed by 284-294 (VDVGGGLGVDY).

It belongs to the Orn/Lys/Arg decarboxylase class-II family. SpeA subfamily. The cofactor is Mg(2+). Pyridoxal 5'-phosphate serves as cofactor.

It catalyses the reaction L-arginine + H(+) = agmatine + CO2. It functions in the pathway amine and polyamine biosynthesis; agmatine biosynthesis; agmatine from L-arginine: step 1/1. In terms of biological role, catalyzes the biosynthesis of agmatine from arginine. The protein is Biosynthetic arginine decarboxylase of Aeromonas salmonicida (strain A449).